Reading from the N-terminus, the 134-residue chain is Putative pre-16S rRNA nuclease (134 aa).

It belongs to the YqgF nuclease family.

It localises to the cytoplasm. Could be a nuclease involved in processing of the 5'-end of pre-16S rRNA. This chain is Putative pre-16S rRNA nuclease, found in Helicobacter pylori (strain ATCC 700392 / 26695) (Campylobacter pylori).